The chain runs to 196 residues: Ribosome maturation factor RimP (196 aa).

Residues 176-196 are disordered; sequence ETNFDEVSTELETDTPSEGDQ. The segment covering 177-196 has biased composition (acidic residues); it reads TNFDEVSTELETDTPSEGDQ.

Belongs to the RimP family.

The protein localises to the cytoplasm. Required for maturation of 30S ribosomal subunits. The chain is Ribosome maturation factor RimP from Roseobacter denitrificans (strain ATCC 33942 / OCh 114) (Erythrobacter sp. (strain OCh 114)).